Consider the following 118-residue polypeptide: Down syndrome critical region protein 4 (118 aa).

Residues 1–39 (MSLIILTRDDEPRIFTPDSDAASPALHSTSPLPDPASAS) form a disordered region. The segment covering 28–39 (STSPLPDPASAS) has biased composition (low complexity).

As to expression, mainly expressed in placenta.

The protein is Down syndrome critical region protein 4 (DSCR4) of Homo sapiens (Human).